The sequence spans 300 residues: Porphobilinogen deaminase (300 aa).

Position 241 is an S-(dipyrrolylmethanemethyl)cysteine (cysteine 241).

Belongs to the HMBS family. As to quaternary structure, monomer. Dipyrromethane serves as cofactor.

It catalyses the reaction 4 porphobilinogen + H2O = hydroxymethylbilane + 4 NH4(+). It functions in the pathway porphyrin-containing compound metabolism; protoporphyrin-IX biosynthesis; coproporphyrinogen-III from 5-aminolevulinate: step 2/4. In terms of biological role, tetrapolymerization of the monopyrrole PBG into the hydroxymethylbilane pre-uroporphyrinogen in several discrete steps. The sequence is that of Porphobilinogen deaminase from Sorangium cellulosum (strain So ce56) (Polyangium cellulosum (strain So ce56)).